Reading from the N-terminus, the 410-residue chain is Shaggy-related protein kinase epsilon (410 aa).

A2 is subject to N-acetylalanine. The region spanning Y74–F358 is the Protein kinase domain. ATP contacts are provided by residues V80–V88 and K103. The active-site Proton acceptor is D199. Y234 carries the post-translational modification Phosphotyrosine.

This sequence belongs to the protein kinase superfamily. CMGC Ser/Thr protein kinase family. GSK-3 subfamily. In terms of assembly, binds to KIB1. Autophosphorylated mainly on threonine and serine residues.

It catalyses the reaction L-seryl-[protein] + ATP = O-phospho-L-seryl-[protein] + ADP + H(+). It carries out the reaction L-threonyl-[protein] + ATP = O-phospho-L-threonyl-[protein] + ADP + H(+). Functionally, may mediate extracellular signals to regulate transcription in differentiating cells. The polypeptide is Shaggy-related protein kinase epsilon (ASK5) (Arabidopsis thaliana (Mouse-ear cress)).